The sequence spans 456 residues: Riboflavin transporter RibZ (456 aa).

The next 14 helical transmembrane spans lie at 5–25 (WIVLIIICIGVFMSTLDGSIL), 45–65 (WVVTAYMLVVTATMLFFGKLG), 78–98 (FFIFTIGSFLCSMSNNLSTLI), 105–125 (AVGASILMATGLGIVSNAFPA), 134–154 (ITGAVVGIGNMSGPVIGGIIL), 158–178 (GWPSIFIINIPIGIIAVFLGI), 192–212 (SFDIPGLLLFASCTTLILLAM), 220–240 (LYLGITALIIFLLLALREVKF), 260–280 (IIGVACYFPQMAVSFLLPFYL), 289–309 (MMAGYVMTVHPLIMVLIAPIA), 321–341 (ILTASFSFMTISLVGMALLKA), 343–363 (SPLYLLIVCLVIFGLGLGAFS), 385–405 (FLATIRNLSFALGTAFFSSFF), and 428–448 (QSYWIAASVCFIGLILTVFFM).

The protein belongs to the major facilitator superfamily.

The protein localises to the cell membrane. Its function is as follows. Transports riboflavin into the cell. The protein is Riboflavin transporter RibZ of Clostridioides difficile (strain 630) (Peptoclostridium difficile).